Reading from the N-terminus, the 418-residue chain is Gamma-glutamyl phosphate reductase (418 aa).

The protein belongs to the gamma-glutamyl phosphate reductase family.

The protein localises to the cytoplasm. The enzyme catalyses L-glutamate 5-semialdehyde + phosphate + NADP(+) = L-glutamyl 5-phosphate + NADPH + H(+). Its pathway is amino-acid biosynthesis; L-proline biosynthesis; L-glutamate 5-semialdehyde from L-glutamate: step 2/2. Functionally, catalyzes the NADPH-dependent reduction of L-glutamate 5-phosphate into L-glutamate 5-semialdehyde and phosphate. The product spontaneously undergoes cyclization to form 1-pyrroline-5-carboxylate. This is Gamma-glutamyl phosphate reductase from Desulfotalea psychrophila (strain LSv54 / DSM 12343).